The following is a 505-amino-acid chain: Band 7 protein CG42540 (505 aa).

Residues 1-164 (MPDSMMDMEH…IHRAEARRAD (164 aa)) are disordered. Positions 47–60 (SEERDRDRDRERDH) are enriched in basic and acidic residues. Low complexity-rich tracts occupy residues 82–104 (QLHQ…QQPQ) and 113–139 (QQQQ…QQLP). Residues 178–198 (LIFLSVALVIMTLPFSLFVCF) traverse the membrane as a helical segment. The segment at 443–505 (GNTPPPLQLA…QQGQQISSAM (63 aa)) is disordered. A compositionally biased stretch (low complexity) spans 451–505 (LAPQQQMGQQQQPQYQQPQQQQQQYQPQQQQQQQQQQPQQQDQLYQQGQQISSAM).

It belongs to the band 7/mec-2 family.

It localises to the membrane. The polypeptide is Band 7 protein CG42540 (Drosophila melanogaster (Fruit fly)).